A 173-amino-acid polypeptide reads, in one-letter code: Translation initiation factor IF-3 (173 aa).

It belongs to the IF-3 family. In terms of assembly, monomer.

Its subcellular location is the cytoplasm. Functionally, IF-3 binds to the 30S ribosomal subunit and shifts the equilibrium between 70S ribosomes and their 50S and 30S subunits in favor of the free subunits, thus enhancing the availability of 30S subunits on which protein synthesis initiation begins. The protein is Translation initiation factor IF-3 of Ehrlichia chaffeensis (strain ATCC CRL-10679 / Arkansas).